The following is a 121-amino-acid chain: UPF0102 protein Dhaf_3740 (121 aa).

The protein belongs to the UPF0102 family.

This Desulfitobacterium hafniense (strain DSM 10664 / DCB-2) protein is UPF0102 protein Dhaf_3740.